Consider the following 322-residue polypeptide: Acetyl-coenzyme A carboxylase carboxyl transferase subunit alpha (322 aa).

Residues 39 to 296 form the CoA carboxyltransferase C-terminal domain; that stretch reads DLTALKKQLI…HSKLVTELNY (258 aa).

The protein belongs to the AccA family. Acetyl-CoA carboxylase is a heterohexamer composed of biotin carboxyl carrier protein (accB), biotin carboxylase (accC) and two subunits each of ACCase subunit alpha (accA) and ACCase subunit beta (accD).

It localises to the plastid. Its subcellular location is the chloroplast. The enzyme catalyses N(6)-carboxybiotinyl-L-lysyl-[protein] + acetyl-CoA = N(6)-biotinyl-L-lysyl-[protein] + malonyl-CoA. Its pathway is lipid metabolism; malonyl-CoA biosynthesis; malonyl-CoA from acetyl-CoA: step 1/1. Its function is as follows. Component of the acetyl coenzyme A carboxylase (ACC) complex. First, biotin carboxylase catalyzes the carboxylation of biotin on its carrier protein (BCCP) and then the CO(2) group is transferred by the carboxyltransferase to acetyl-CoA to form malonyl-CoA. The protein is Acetyl-coenzyme A carboxylase carboxyl transferase subunit alpha of Antithamnion sp. (Red alga).